A 310-amino-acid chain; its full sequence is L-lactate dehydrogenase (310 aa).

NAD(+)-binding positions include 10–11 (MV), aspartate 32, tyrosine 62, and 76–77 (GV). Substrate-binding positions include glutamine 79, arginine 85, and 117–120 (NPVD). Residues 115-117 (ATN) and serine 140 contribute to the NAD(+) site. Substrate is bound at residue 145-148 (DTAR). 2 residues coordinate beta-D-fructose 1,6-bisphosphate: arginine 150 and histidine 165. Histidine 172 serves as the catalytic Proton acceptor. Tyrosine 218 is subject to Phosphotyrosine. Threonine 227 contacts substrate.

It belongs to the LDH/MDH superfamily. LDH family. In terms of assembly, homotetramer.

The protein localises to the cytoplasm. It carries out the reaction (S)-lactate + NAD(+) = pyruvate + NADH + H(+). It functions in the pathway fermentation; pyruvate fermentation to lactate; (S)-lactate from pyruvate: step 1/1. Allosterically activated by fructose 1,6-bisphosphate (FBP). Functionally, catalyzes the conversion of lactate to pyruvate. In Thermus thermophilus (strain ATCC 27634 / DSM 579 / HB8), this protein is L-lactate dehydrogenase.